A 207-amino-acid chain; its full sequence is Outer-membrane lipoprotein LolB (207 aa).

Residues 1–21 (MPTNTVRCLRLLPLASVLLAA) form the signal peptide. C22 carries the N-palmitoyl cysteine lipid modification. C22 carries S-diacylglycerol cysteine lipidation.

The protein belongs to the LolB family. As to quaternary structure, monomer.

The protein localises to the cell outer membrane. Plays a critical role in the incorporation of lipoproteins in the outer membrane after they are released by the LolA protein. The sequence is that of Outer-membrane lipoprotein LolB from Pectobacterium carotovorum subsp. carotovorum (strain PC1).